Reading from the N-terminus, the 288-residue chain is uncharacterized protein (288 aa).

4 consecutive transmembrane segments (helical) span residues L43–I63, L190–E210, G243–I263, and L265–L285.

It localises to the cell membrane. This is an uncharacterized protein from Rickettsia prowazekii (strain Madrid E).